The sequence spans 35 residues: Photosystem II reaction center protein M (35 aa).

Residues Ile5 to Leu25 form a helical membrane-spanning segment.

This sequence belongs to the PsbM family. In terms of assembly, PSII is composed of 1 copy each of membrane proteins PsbA, PsbB, PsbC, PsbD, PsbE, PsbF, PsbH, PsbI, PsbJ, PsbK, PsbL, PsbM, PsbT, PsbX, PsbY, PsbZ, Psb30/Ycf12, at least 3 peripheral proteins of the oxygen-evolving complex and a large number of cofactors. It forms dimeric complexes.

It localises to the plastid. The protein resides in the chloroplast thylakoid membrane. One of the components of the core complex of photosystem II (PSII). PSII is a light-driven water:plastoquinone oxidoreductase that uses light energy to abstract electrons from H(2)O, generating O(2) and a proton gradient subsequently used for ATP formation. It consists of a core antenna complex that captures photons, and an electron transfer chain that converts photonic excitation into a charge separation. This subunit is found at the monomer-monomer interface. The protein is Photosystem II reaction center protein M of Tetradesmus obliquus (Green alga).